Consider the following 116-residue polypeptide: Ribonuclease P protein component (116 aa).

This sequence belongs to the RnpA family. Consists of a catalytic RNA component (M1 or rnpB) and a protein subunit.

The enzyme catalyses Endonucleolytic cleavage of RNA, removing 5'-extranucleotides from tRNA precursor.. RNaseP catalyzes the removal of the 5'-leader sequence from pre-tRNA to produce the mature 5'-terminus. It can also cleave other RNA substrates such as 4.5S RNA. The protein component plays an auxiliary but essential role in vivo by binding to the 5'-leader sequence and broadening the substrate specificity of the ribozyme. The chain is Ribonuclease P protein component from Gluconacetobacter diazotrophicus (strain ATCC 49037 / DSM 5601 / CCUG 37298 / CIP 103539 / LMG 7603 / PAl5).